A 703-amino-acid polypeptide reads, in one-letter code: Epidermal growth factor receptor (703 aa).

The N-terminal stretch at 1–30 (MGVRSPLSASGPRGAAVLVLLLLGVALCSA) is a signal peptide. The Extracellular segment spans residues 31–654 (VEEKKVCQGT…GCPNGSKTPS (624 aa)). An intrachain disulfide couples cysteine 37 to cysteine 64. Residues asparagine 134, asparagine 190, and asparagine 200 are each glycosylated (N-linked (GlcNAc...) asparagine). 13 disulfides stabilise this stretch: cysteine 164/cysteine 194, cysteine 197/cysteine 206, cysteine 201/cysteine 214, cysteine 222/cysteine 230, cysteine 226/cysteine 238, cysteine 239/cysteine 247, cysteine 243/cysteine 255, cysteine 258/cysteine 267, cysteine 271/cysteine 298, cysteine 302/cysteine 314, cysteine 318/cysteine 333, cysteine 336/cysteine 340, and cysteine 344/cysteine 369. Residues asparagine 359, asparagine 368, and asparagine 420 are each glycosylated (N-linked (GlcNAc...) asparagine). Intrachain disulfides connect cysteine 477-cysteine 506, cysteine 513-cysteine 522, cysteine 517-cysteine 530, cysteine 533-cysteine 542, cysteine 546-cysteine 562, cysteine 565-cysteine 581, cysteine 569-cysteine 589, cysteine 592-cysteine 601, cysteine 605-cysteine 627, cysteine 630-cysteine 638, and cysteine 634-cysteine 646. Residues asparagine 573 and asparagine 578 are each glycosylated (N-linked (GlcNAc...) asparagine). Residues asparagine 613 and asparagine 633 are each glycosylated (N-linked (GlcNAc...) asparagine). Asparagine 648 is a glycosylation site (N-linked (GlcNAc...) asparagine). Residues 655-667 (IAAGVVGGLLCLV) form a helical membrane-spanning segment. Topologically, residues 668–703 (VVGLGIGLYLRRRHIVRKRTLRRLLQERELVEPLTP) are cytoplasmic. Residues threonine 687 and threonine 702 each carry the phosphothreonine modification.

This sequence belongs to the protein kinase superfamily. Tyr protein kinase family. EGF receptor subfamily. In terms of assembly, binding of the ligand triggers homo- and/or heterodimerization of the receptor triggering its autophosphorylation. Post-translationally, phosphorylated. Autophosphorylates.

The protein resides in the cell membrane. Its subcellular location is the endoplasmic reticulum membrane. The protein localises to the golgi apparatus membrane. It localises to the nucleus membrane. It is found in the endosome. The protein resides in the endosome membrane. Its subcellular location is the nucleus. It carries out the reaction L-tyrosyl-[protein] + ATP = O-phospho-L-tyrosyl-[protein] + ADP + H(+). Its activity is regulated as follows. Endocytosis and inhibition of the activated EGFR by phosphatases constitute immediate regulatory mechanisms. Moreover, inducible feedback inhibitors may constitute alternative regulatory mechanisms for the EGFR signaling. Functionally, receptor tyrosine kinase binding ligands of the EGF family and activating several signaling cascades to convert extracellular cues into appropriate cellular responses. Known ligands include EGF and TGFA/TGF-alpha. Ligand binding triggers receptor homo- and/or heterodimerization and autophosphorylation on key cytoplasmic residues. The phosphorylated receptor recruits adapter proteins like GRB2 which in turn activates complex downstream signaling cascades. Activates at least 4 major downstream signaling cascades including the RAS-RAF-MEK-ERK, PI3 kinase-AKT, PLCgamma-PKC and STATs modules. May also activate the NF-kappa-B signaling cascade. The sequence is that of Epidermal growth factor receptor (EGFR) from Gallus gallus (Chicken).